A 46-amino-acid polypeptide reads, in one-letter code: uncharacterized protein (46 aa).

This is an uncharacterized protein from Archaeoglobus fulgidus (strain ATCC 49558 / DSM 4304 / JCM 9628 / NBRC 100126 / VC-16).